A 461-amino-acid polypeptide reads, in one-letter code: Argininosuccinate lyase (461 aa).

It belongs to the lyase 1 family. Argininosuccinate lyase subfamily.

It localises to the cytoplasm. It carries out the reaction 2-(N(omega)-L-arginino)succinate = fumarate + L-arginine. Its pathway is amino-acid biosynthesis; L-arginine biosynthesis; L-arginine from L-ornithine and carbamoyl phosphate: step 3/3. Its activity is regulated as follows. Strongly inhibited by L-arginine. Inhibitory effects are lowered at pH 7.0 compared to those at pH 8.0. At 42 degrees Celsius and pH 8.0, activity decreases to 77% and 25% in the presence of 1 mM and 10 mM arginine, respectively. The other amino and organic acids do not affect activity. In terms of biological role, catalyzes the last step of arginine biosynthesis, the conversion of argininosuccinate into L-arginine and fumarate. The polypeptide is Argininosuccinate lyase (Nostoc sp. (strain PCC 7120 / SAG 25.82 / UTEX 2576)).